The following is a 380-amino-acid chain: Alcohol dehydrogenase 3 (380 aa).

Zn(2+) is bound by residues C48, T50, H70, C100, C103, C106, C114, and C178. Residues T50 and H70 each coordinate an alcohol. Residue T50 coordinates NAD(+). NAD(+) is bound by residues 203 to 208, D227, R232, T273, V296, 296 to 298, F323, and R373; these read GLGAVG and VGV.

This sequence belongs to the zinc-containing alcohol dehydrogenase family. In terms of assembly, homodimer. Homotetramer. The cofactor is Zn(2+).

The protein localises to the cytoplasm. It carries out the reaction a primary alcohol + NAD(+) = an aldehyde + NADH + H(+). The catalysed reaction is a secondary alcohol + NAD(+) = a ketone + NADH + H(+). This is Alcohol dehydrogenase 3 (ADH3) from Solanum tuberosum (Potato).